The sequence spans 313 residues: Biotin synthase (313 aa).

The Radical SAM core domain maps to 28 to 258; it reads NFGNDIELCS…LFPQARLRLS (231 aa). [4Fe-4S] cluster-binding residues include C46, C50, and C53. 4 residues coordinate [2Fe-2S] cluster: C90, C121, C181, and R256.

This sequence belongs to the radical SAM superfamily. Biotin synthase family. In terms of assembly, homodimer. The cofactor is [4Fe-4S] cluster. Requires [2Fe-2S] cluster as cofactor.

The catalysed reaction is (4R,5S)-dethiobiotin + (sulfur carrier)-SH + 2 reduced [2Fe-2S]-[ferredoxin] + 2 S-adenosyl-L-methionine = (sulfur carrier)-H + biotin + 2 5'-deoxyadenosine + 2 L-methionine + 2 oxidized [2Fe-2S]-[ferredoxin]. Its pathway is cofactor biosynthesis; biotin biosynthesis; biotin from 7,8-diaminononanoate: step 2/2. In terms of biological role, catalyzes the conversion of dethiobiotin (DTB) to biotin by the insertion of a sulfur atom into dethiobiotin via a radical-based mechanism. This chain is Biotin synthase, found in Francisella tularensis subsp. mediasiatica (strain FSC147).